Reading from the N-terminus, the 406-residue chain is Paracaspase (406 aa).

The caspase-like stretch occupies residues Ile-193 to Thr-374. Residues His-266 and Cys-311 contribute to the active site.

This sequence belongs to the peptidase C14B family.

Functionally, not required for DIF-induced autophagic cell death and necrotic cell death. The protein is Paracaspase (pcp) of Dictyostelium discoideum (Social amoeba).